A 520-amino-acid polypeptide reads, in one-letter code: Basal body-orientation factor 1 (520 aa).

The span at 1 to 21 (MPKKKGKGKGKGKGKGKGKKD) shows a compositional bias: basic residues. Positions 1–34 (MPKKKGKGKGKGKGKGKGKKDGKHDSKADRESEI) are disordered. The segment covering 22–34 (GKHDSKADRESEI) has biased composition (basic and acidic residues). Coiled coils occupy residues 27-175 (KADR…REKM) and 245-386 (VKEA…RQEA). The interval 468 to 492 (AHPPALSASSSEKIQVSSDAGSTVE) is disordered. Positions 469-478 (HPPALSASSS) are enriched in low complexity. Over residues 479–492 (EKIQVSSDAGSTVE) the composition is skewed to polar residues.

This sequence belongs to the BBOF1 family.

It is found in the cytoplasm. Its subcellular location is the cytoskeleton. The protein resides in the cilium basal body. In terms of biological role, basal body protein required in multiciliate cells to align and maintain cilia orientation in response to flow. May act by mediating a maturation step that stabilizes and aligns cilia orientation. Not required to respond to planar cell polarity (PCP) or flow-based orientation cues. The polypeptide is Basal body-orientation factor 1 (Danio rerio (Zebrafish)).